A 153-amino-acid polypeptide reads, in one-letter code: Ribosome maturation factor RimP (153 aa).

Belongs to the RimP family.

The protein resides in the cytoplasm. Required for maturation of 30S ribosomal subunits. This Clostridium botulinum (strain Alaska E43 / Type E3) protein is Ribosome maturation factor RimP.